Reading from the N-terminus, the 624-residue chain is (-)-beta-phellandrene synthase 4, chloroplastic (624 aa).

Residues 1 to 48 (MAIVSSVPLASKSCLHKSLISSIHKLKPFCRTIPTLGMSRPGKSVMPS) constitute a chloroplast transit peptide. The segment at 41-60 (PGKSVMPSMSMSSPVSDDGV) is disordered. A compositionally biased stretch (low complexity) spans 44–56 (SVMPSMSMSSPVS). Positions 375, 379, and 527 each coordinate Mg(2+). The DDXXD motif motif lies at 375–379 (DDMYD).

Belongs to the terpene synthase family. Tpsd subfamily. It depends on Mg(2+) as a cofactor. Mn(2+) serves as cofactor.

The protein localises to the plastid. The protein resides in the chloroplast. It catalyses the reaction (2E)-geranyl diphosphate = (-)-beta-phellandrene + diphosphate. It participates in terpene metabolism; oleoresin biosynthesis. Functionally, terpene synthase (TPS) involved in the biosynthesis of monoterpene natural products included in conifer oleoresin secretions and volatile emissions; these compounds contribute to biotic and abiotic stress defense against herbivores and pathogens. Catalyzes the conversion of (2E)-geranyl diphosphate (GPP) to (-)-beta-phellandrene. This Picea sitchensis (Sitka spruce) protein is (-)-beta-phellandrene synthase 4, chloroplastic.